We begin with the raw amino-acid sequence, 199 residues long: ATP-dependent Clp protease proteolytic subunit (199 aa).

Ser-98 (nucleophile) is an active-site residue. The active site involves His-123.

Belongs to the peptidase S14 family. Fourteen ClpP subunits assemble into 2 heptameric rings which stack back to back to give a disk-like structure with a central cavity, resembling the structure of eukaryotic proteasomes.

Its subcellular location is the cytoplasm. It catalyses the reaction Hydrolysis of proteins to small peptides in the presence of ATP and magnesium. alpha-casein is the usual test substrate. In the absence of ATP, only oligopeptides shorter than five residues are hydrolyzed (such as succinyl-Leu-Tyr-|-NHMec, and Leu-Tyr-Leu-|-Tyr-Trp, in which cleavage of the -Tyr-|-Leu- and -Tyr-|-Trp bonds also occurs).. In terms of biological role, cleaves peptides in various proteins in a process that requires ATP hydrolysis. Has a chymotrypsin-like activity. Plays a major role in the degradation of misfolded proteins. The polypeptide is ATP-dependent Clp protease proteolytic subunit (Clostridium botulinum (strain Alaska E43 / Type E3)).